Here is a 508-residue protein sequence, read N- to C-terminus: Phosphoglycerate kinase A (508 aa).

Positions 32, 33, 34, 35, 48, 70, 71, 73, 74, 224, 260, and 261 each coordinate (2R)-3-phosphoglycerate. Gly-306 and Ala-307 together coordinate ADP. Position 306 (Gly-306) interacts with CDP. 2 residues coordinate AMP: Ala-307 and Lys-308. Ala-307 is an ATP binding site. A Mg(2+)-binding site is contributed by Ala-307. Lys-308 contacts (2R)-3-phosphoglycerate. Residue Glu-311 coordinates CDP. Residue Glu-311 coordinates Mg(2+). Residues Lys-312 and Gly-330 each contribute to the ADP site. Lys-312 provides a ligand contact to AMP. Position 312 (Lys-312) interacts with ATP. CDP is bound at residue Gly-330. Positions 331 and 403 each coordinate AMP. ATP is bound by residues Ala-331 and Ala-403. Positions 403 and 427 each coordinate ADP. CDP is bound by residues Gly-428 and Phe-433. Residues Phe-433, Glu-434, Glu-466, and Ser-467 each coordinate ADP. Glu-434 is an AMP binding site. ATP-binding residues include Glu-434, Glu-466, and Ser-467. Glu-466 lines the Mg(2+) pocket.

The protein belongs to the phosphoglycerate kinase family. As to quaternary structure, monomer. Mg(2+) is required as a cofactor.

It carries out the reaction (2R)-3-phosphoglycerate + ATP = (2R)-3-phospho-glyceroyl phosphate + ADP. Its pathway is carbohydrate degradation; glycolysis; pyruvate from D-glyceraldehyde 3-phosphate: step 2/5. The sequence is that of Phosphoglycerate kinase A from Trypanosoma brucei brucei.